The sequence spans 869 residues: MTESEIPKEYNANEVEEKWMEKWNLSMYHFNWGEDPRPQYIIDTPPPYPTGNFHIGNALNWCYIDYIARYKRMRGYNVMFPQGWDCHGLPTEVKVEEIHGITKNQVPRAEFRKMCRELTAGNIEKMRKTMLRLGFSVDWSNEFVTMEPSYFVKTQKSFVRMYNDGHIYHEDHPVNWCPRCETAIAFAEVEYESRQTKLNFVHFDKVDIATTRPELMAACVAVAVNPKDERYSQHIGKEITVPIFGQKVTLIADEAVEPEFGTGAVMICTFGDKQDVRWWVKYGLPLVKALDKQGRMTKAAGKYEGMTLAECREAVIADLKAAGFLYDQKSLEQNVGLCWRCDTPIEILSEPQWFVKINHEGILKAADEIKWYPEYMKVRLQNWTGTMEWDWCISRQRIFATPIPIWYCKKCGEVMIAEESWLPIDPNENTPKKACACGSTEFEPETDVLDTWMDSSITALHVSGWESEHEMRLPTQIRPQGHDIIRTWAFYTILRSLALEGKRPWDSIVINGMVLGPDGHKMSKSLGNVISPEEVTTQYSADAFRQWGAVGGSTGSDVMFRWKDVVSASRFLQKMWSIYRFSMSHLKDFEPADAENFPPDALLTIDRWLLSKLNKLVDTATKELDGYQFDSTFKAIRGFAWEVLADNYLELVKGRLYGEDPEGRKAAQYVLYTTTRTLSLLLAPFIPFFAEEMYSRFSEESVHTQTWPAVNEKLISEEAEAAGEMIKEITGEVRRYKSDLGMALNAPLKKIEIYNAEIDTGDIAGATNSEVELMAGAPSFEYVPVEVKPNMGFLGPRFRKEAGAVVKALQAEDPAAIEAQAASGKITITVNGEAVKLEPEAVEIRKEVISGGREVDVLDVKGAVVVIVR.

The 'HIGH' region motif lies at 47-57 (PYPTGNFHIGN). The 'KMSKS' region motif lies at 521–525 (KMSKS). Lys-524 serves as a coordination point for ATP.

This sequence belongs to the class-I aminoacyl-tRNA synthetase family. ValS type 2 subfamily.

Its subcellular location is the cytoplasm. It carries out the reaction tRNA(Val) + L-valine + ATP = L-valyl-tRNA(Val) + AMP + diphosphate. Its function is as follows. Catalyzes the attachment of valine to tRNA(Val). As ValRS can inadvertently accommodate and process structurally similar amino acids such as threonine, to avoid such errors, it has a 'posttransfer' editing activity that hydrolyzes mischarged Thr-tRNA(Val) in a tRNA-dependent manner. The chain is Valine--tRNA ligase from Methanosarcina acetivorans (strain ATCC 35395 / DSM 2834 / JCM 12185 / C2A).